The chain runs to 256 residues: Deoxyribose-phosphate aldolase (256 aa).

Catalysis depends on D102, which acts as the Proton donor/acceptor. Residue K165 is the Schiff-base intermediate with acetaldehyde of the active site. Catalysis depends on K197, which acts as the Proton donor/acceptor.

The protein belongs to the DeoC/FbaB aldolase family. DeoC type 2 subfamily.

It is found in the cytoplasm. The enzyme catalyses 2-deoxy-D-ribose 5-phosphate = D-glyceraldehyde 3-phosphate + acetaldehyde. Its pathway is carbohydrate degradation; 2-deoxy-D-ribose 1-phosphate degradation; D-glyceraldehyde 3-phosphate and acetaldehyde from 2-deoxy-alpha-D-ribose 1-phosphate: step 2/2. Functionally, catalyzes a reversible aldol reaction between acetaldehyde and D-glyceraldehyde 3-phosphate to generate 2-deoxy-D-ribose 5-phosphate. The polypeptide is Deoxyribose-phosphate aldolase (Shewanella sp. (strain W3-18-1)).